A 287-amino-acid polypeptide reads, in one-letter code: MKSRLFIISQYLLPHHLLSRLAGCIAECRVRWFKNAFTAWFAKRYQVNMSEALVEDLSAYEHFNAFFTRALKPGARPLDETPGAILCPADGAVSQLGPIEHGRIFQAKGHGFSAQELLGGDPAMAAPFMGGEFATIYLSPKDYHRVHMPLAGTLREMVYVPGRLFSVNQTTAENVPELFARNERVVCLFDTERGPMAVVLVGAMIVASIETVWAGLVTPPKRELKTFRYDEASRTPIHLEKGAELGRFKLGSTAIVLFGPEQVKWAESLGAGSAVRMGQQLAAPAQA.

Active-site charge relay system; for autoendoproteolytic cleavage activity residues include Asp-90, His-147, and Ser-252. The Schiff-base intermediate with substrate; via pyruvic acid; for decarboxylase activity role is filled by Ser-252. The residue at position 252 (Ser-252) is a Pyruvic acid (Ser); by autocatalysis.

Belongs to the phosphatidylserine decarboxylase family. PSD-B subfamily. Prokaryotic type I sub-subfamily. Heterodimer of a large membrane-associated beta subunit and a small pyruvoyl-containing alpha subunit. Pyruvate is required as a cofactor. Is synthesized initially as an inactive proenzyme. Formation of the active enzyme involves a self-maturation process in which the active site pyruvoyl group is generated from an internal serine residue via an autocatalytic post-translational modification. Two non-identical subunits are generated from the proenzyme in this reaction, and the pyruvate is formed at the N-terminus of the alpha chain, which is derived from the carboxyl end of the proenzyme. The autoendoproteolytic cleavage occurs by a canonical serine protease mechanism, in which the side chain hydroxyl group of the serine supplies its oxygen atom to form the C-terminus of the beta chain, while the remainder of the serine residue undergoes an oxidative deamination to produce ammonia and the pyruvoyl prosthetic group on the alpha chain. During this reaction, the Ser that is part of the protease active site of the proenzyme becomes the pyruvoyl prosthetic group, which constitutes an essential element of the active site of the mature decarboxylase.

Its subcellular location is the cell membrane. The catalysed reaction is a 1,2-diacyl-sn-glycero-3-phospho-L-serine + H(+) = a 1,2-diacyl-sn-glycero-3-phosphoethanolamine + CO2. Its pathway is phospholipid metabolism; phosphatidylethanolamine biosynthesis; phosphatidylethanolamine from CDP-diacylglycerol: step 2/2. Functionally, catalyzes the formation of phosphatidylethanolamine (PtdEtn) from phosphatidylserine (PtdSer). The protein is Phosphatidylserine decarboxylase proenzyme of Pseudomonas putida (strain ATCC 47054 / DSM 6125 / CFBP 8728 / NCIMB 11950 / KT2440).